We begin with the raw amino-acid sequence, 135 residues long: Hemoglobin subunit beta-3 (135 aa).

In terms of domain architecture, Globin spans 2–135 (HWTAEEKALV…VVDALSKAYQ (134 aa)). The heme b site is built by H57 and H81.

Belongs to the globin family. As to quaternary structure, hb 3 is a heterotetramer of two alpha and two beta-3 chains. Red blood cells (at protein level).

Functionally, involved in oxygen transport from gills to the various peripheral tissues. The protein is Hemoglobin subunit beta-3 of Somniosus microcephalus (Greenland sleeper shark).